The sequence spans 338 residues: Methionine import ATP-binding protein MetN 2 (338 aa).

Positions 2–242 (IEIEKVCVDF…PQHAFTQQLV (241 aa)) constitute an ABC transporter domain. 39–46 (GTSGAGKS) serves as a coordination point for ATP.

It belongs to the ABC transporter superfamily. Methionine importer (TC 3.A.1.24) family. In terms of assembly, the complex is composed of two ATP-binding proteins (MetN), two transmembrane proteins (MetI) and a solute-binding protein (MetQ).

The protein localises to the cell inner membrane. The catalysed reaction is L-methionine(out) + ATP + H2O = L-methionine(in) + ADP + phosphate + H(+). The enzyme catalyses D-methionine(out) + ATP + H2O = D-methionine(in) + ADP + phosphate + H(+). In terms of biological role, part of the ABC transporter complex MetNIQ involved in methionine import. Responsible for energy coupling to the transport system. The polypeptide is Methionine import ATP-binding protein MetN 2 (Salmonella choleraesuis (strain SC-B67)).